A 44-amino-acid chain; its full sequence is Omega-plectoxin-Pt1a (44 aa).

Cystine bridges form between Cys3–Cys17, Cys10–Cys23, Cys16–Cys35, Cys20–Cys42, and Cys25–Cys33. Thr44 bears the Threonine amide mark. A lipid anchor (O-palmitoyl threonine) is attached at Thr44.

The protein belongs to the neurotoxin 02 (plectoxin) family. 02 (plectoxin) subfamily. Contains 5 disulfide bonds. In terms of processing, acylation by palmitate is required for biological activity. In terms of tissue distribution, expressed by the venom gland.

The protein resides in the secreted. Its function is as follows. Toxin that inhibits presynaptic voltage-gated calcium channel (Cav) in Drosophila nerve terminals, most likely through specific block of the Cav2 channel (known as Dmca1A). In Plectreurys tristis (Spider), this protein is Omega-plectoxin-Pt1a.